We begin with the raw amino-acid sequence, 603 residues long: Multicopper oxidase MCE (603 aa).

The signal sequence occupies residues 1 to 21 (MNTFICSALICLSWLPGFIQA). In terms of domain architecture, Plastocyanin-like 1 spans 30–144 (ITYAKGAPDG…YGALWIRPKE (115 aa)). The N-linked (GlcNAc...) asparagine glycan is linked to Asn75. The Cu cation site is built by His79, His81, His123, and His125. Asn155, Asn180, Asn235, Asn256, Asn272, Asn275, Asn388, Asn394, Asn413, and Asn455 each carry an N-linked (GlcNAc...) asparagine glycan. The 181-residue stretch at 173–353 (LIVSDWSNFT…TPGDYTIRLP (181 aa)) folds into the Plastocyanin-like 2 domain. Positions 450 to 581 (LLYNPNSTAA…GGMAGVIMDG (132 aa)) constitute a Plastocyanin-like 3 domain. His495 contributes to the Cu cation binding site. N-linked (GlcNAc...) asparagine glycosylation is found at Asn512 and Asn595.

This sequence belongs to the multicopper oxidase family.

The enzyme catalyses 4 monapinone A + O2 = 2 dinapinone A + 2 H2O. It carries out the reaction 4 monapinone E + O2 = 2 dinapinone E + 2 H2O. It participates in secondary metabolite biosynthesis. In terms of biological role, multicopper oxidase; part of the gene cluster that mediates the biosynthesis of dinapinones DPA1 (or (M)-DPA) and DPA2 (or (P)-DPA), biaryl dihydronaphthopyranones that act in concert as inhibitors of triacylglycerol accumulation in mammalian cells. The first step in the pathway corresponds to the biosynthesis of dihydroxy-decanoyl-CoA by the fungal type I fatty acid synthase (formed by ORF4 and ORF5). The cluster-specific polyketide synthase (ORF7) then accepts and extends dihydroxy-decanoyl-CoA with 6 malonyl-CoA moieties and cyclizes the molecule to produce a putative polyhydroxynaphthopyranone intermediate, which is further methylated by the cluster-specific methyltransferase (ORF1) at 7-OH to produce monapinone A (MPA). MCE catalyzes the regioselective biaryl coupling of monapinone A (MPA) at the 8,8'-positions to afford dimeric atropisomers DPA1 and DPA2 in a ratio of approximately 1:2.5. Monapinone E (MPE) also appears to be a substrate for MCE and provides the atropisomers dinapinones DPE1 (or (M)-DPE) and DPE2 (or (P)-DPE). The sequence is that of Multicopper oxidase MCE from Talaromyces pinophilus (Penicillium pinophilum).